A 131-amino-acid polypeptide reads, in one-letter code: Large ribosomal subunit protein bL19c (131 aa).

The protein belongs to the bacterial ribosomal protein bL19 family.

It localises to the plastid. The protein localises to the cyanelle. Its function is as follows. This protein is located at the 30S-50S ribosomal subunit interface and may play a role in the structure and function of the aminoacyl-tRNA binding site. The sequence is that of Large ribosomal subunit protein bL19c (rpl19) from Cyanophora paradoxa.